The following is a 139-amino-acid chain: ATP synthase epsilon chain, chloroplastic (139 aa).

It belongs to the ATPase epsilon chain family. As to quaternary structure, F-type ATPases have 2 components, CF(1) - the catalytic core - and CF(0) - the membrane proton channel. CF(1) has five subunits: alpha(3), beta(3), gamma(1), delta(1), epsilon(1). CF(0) has three main subunits: a, b and c.

The protein localises to the plastid. It is found in the chloroplast thylakoid membrane. Its function is as follows. Produces ATP from ADP in the presence of a proton gradient across the membrane. The sequence is that of ATP synthase epsilon chain, chloroplastic from Welwitschia mirabilis (Tree tumbo).